The sequence spans 67 residues: KDGYPVEVTGCKKSCYKLGENKFCNRECKMKHRGGSYGYCYFFGCYCEGLAESTPTWPLPNKSCGKK.

The 65-residue stretch at 1 to 65 folds into the LCN-type CS-alpha/beta domain; the sequence is KDGYPVEVTG…TWPLPNKSCG (65 aa). 4 disulfides stabilise this stretch: C11/C64, C15/C40, C24/C45, and C28/C47. C64 carries the cysteine amide modification. Positions 65–67 are excised as a propeptide; the sequence is GKK.

Belongs to the long (4 C-C) scorpion toxin superfamily. Sodium channel inhibitor family. Beta subfamily. In terms of tissue distribution, expressed by the venom gland.

The protein resides in the secreted. In terms of biological role, beta toxins bind voltage-independently at site-4 of sodium channels (Nav) and shift the voltage of activation toward more negative potentials thereby affecting sodium channel activation and promoting spontaneous and repetitive firing. This chain is Neurotoxin Cex9, found in Centruroides exilicauda (Bark scorpion).